A 312-amino-acid chain; its full sequence is Regulation of nuclear pre-mRNA domain-containing protein 1A (312 aa).

N-acetylserine is present on Ser-2. The CID domain occupies 2–133 (SAFSEAALEK…QLKQALYGDK (132 aa)). Residues Ser-153, Ser-156, and Ser-285 each carry the phosphoserine modification. A coiled-coil region spans residues 244–286 (LADFLRCQKEALAEKEHKLEEYKRKLARVSLVRKELRSRIQSL).

This sequence belongs to the UPF0400 (RTT103) family. As to quaternary structure, may form a heterodimer with RPRD1B. Associates with the RNA polymerase II subunit POLR2A (via CTD phosphorylated at 'Ser-2' and 'Ser-7' of the heptad repeats).

It is found in the nucleus. In terms of biological role, interacts with phosphorylated C-terminal heptapeptide repeat domain (CTD) of the largest RNA polymerase II subunit POLR2A, and participates in dephosphorylation of the CTD by RPAP2. May act as a negative regulator of cyclin-D1 (CCND1) and cyclin-E (CCNE1) in the cell cycle. The chain is Regulation of nuclear pre-mRNA domain-containing protein 1A (RPRD1A) from Pongo abelii (Sumatran orangutan).